The following is a 491-amino-acid chain: Probable Xaa-Pro aminopeptidase An01g13040 (491 aa).

Mn(2+)-binding residues include Asp-276, Asp-287, Glu-420, and Glu-459.

Belongs to the peptidase M24B family. The cofactor is Mn(2+).

It carries out the reaction Release of any N-terminal amino acid, including proline, that is linked to proline, even from a dipeptide or tripeptide.. Functionally, catalyzes the removal of a penultimate prolyl residue from the N-termini of peptides. The chain is Probable Xaa-Pro aminopeptidase An01g13040 from Aspergillus niger (strain ATCC MYA-4892 / CBS 513.88 / FGSC A1513).